The following is a 563-amino-acid chain: GTPase Obg (563 aa).

In terms of domain architecture, Obg spans 2–168; that stretch reads SDFVDRVTVH…RDVILELKSI (167 aa). An OBG-type G domain is found at 169-349; sequence ADVALVGFPS…LNFALSALVH (181 aa). GTP-binding positions include 175 to 182, 200 to 204, 221 to 224, 301 to 304, and 330 to 332; these read GFPSAGKS, FTTLV, DVPG, NKID, and STA. Residues S182 and T202 each contribute to the Mg(2+) site. The OCT domain occupies 383 to 469; it reads DEGGSALEFT…ARMVEFDWDP (87 aa). Disordered stretches follow at residues 478–509 and 528–563; these read LDGSNLGARGKDLRLEEQDPRTHRRSNAERRA and ERKAGHWADPTVDDDRHDENSLFGHGESSEDGETEE. The segment covering 486 to 509 has biased composition (basic and acidic residues); the sequence is RGKDLRLEEQDPRTHRRSNAERRA.

Belongs to the TRAFAC class OBG-HflX-like GTPase superfamily. OBG GTPase family. In terms of assembly, monomer. Requires Mg(2+) as cofactor.

Its subcellular location is the cytoplasm. An essential GTPase which binds GTP, GDP and possibly (p)ppGpp with moderate affinity, with high nucleotide exchange rates and a fairly low GTP hydrolysis rate. Plays a role in control of the cell cycle, stress response, ribosome biogenesis and in those bacteria that undergo differentiation, in morphogenesis control. This Bifidobacterium longum subsp. infantis (strain ATCC 15697 / DSM 20088 / JCM 1222 / NCTC 11817 / S12) protein is GTPase Obg.